The primary structure comprises 1144 residues: Adenylate cyclase type 3 (1144 aa).

The Cytoplasmic segment spans residues 1–79 (MTEDQGFSDP…FKRQRHETLL (79 aa)). The next 5 helical transmembrane spans lie at 80–100 (VLVV…AVVF), 105–125 (LAPL…FVLC), 139–159 (VPYL…GLNF), 173–193 (AFFV…IVII), and 226–246 (ILAN…SYYM). The Mg(2+) site is built by Asp324, Ile325, and Asp368. Residues 324–329 (DIVGFT) and 366–368 (LGD) contribute to the ATP site. Residues 381-401 (EDHAVCSILMGLAMVEAISYV) form a helical membrane-spanning segment. The Cytoplasmic portion of the chain corresponds to 402–630 (REKTKTGVDM…RYSVEKEKQS (229 aa)). ATP is bound at residue Arg412. Lys465 participates in a covalent cross-link: Glycyl lysine isopeptide (Lys-Gly) (interchain with G-Cter in SUMO3). Residues 504 to 563 (QNGLNGSALPNGAPASKPSSPALIETKEPNGSAHASGSTSEEAEEQEAQADNPSFPNPRR) form a disordered region. The residue at position 523 (Ser523) is a Phosphoserine. Over residues 534–543 (GSAHASGSTS) the composition is skewed to low complexity. Residue Ser578 is modified to Phosphoserine. The next 3 helical transmembrane spans lie at 631-651 (GAAF…EILI), 662-682 (FVVG…AIFP), and 706-726 (WAML…LSCL). A glycan (N-linked (GlcNAc...) asparagine) is linked at Asn734. The next 3 helical transmembrane spans lie at 755–775 (VAVL…MVKL), 777–797 (LMLL…CPVF), and 833–853 (LPLV…MLSF). The Cytoplasmic portion of the chain corresponds to 854–1144 (YYFSRHVEKL…TLPHQVVDNP (291 aa)). Residues Lys975, 1062–1064 (DIW), and 1069–1073 (NVASR) contribute to the ATP site. Ser1076 carries the phosphoserine; by CaMK2 modification. Lys1109 contacts ATP.

Belongs to the adenylyl cyclase class-4/guanylyl cyclase family. The cofactor is Mg(2+). Mn(2+) is required as a cofactor. Post-translationally, N-glycosylated. Sumoylated. Sumoylation is required for targeting ot olfactory cilia. In terms of processing, rapidly phosphorylated after stimulation by odorants or forskolin. Phosphorylation by CaMK2 at Ser-1076 down-regulates enzyme activity. Detected on cilia on the olfactory epithelium (at protein level). Detected on cilia on the olfactory epithelium.

Its subcellular location is the cell membrane. It is found in the golgi apparatus. The protein localises to the cell projection. The protein resides in the cilium. It localises to the cytoplasm. It catalyses the reaction ATP = 3',5'-cyclic AMP + diphosphate. With respect to regulation, specifically activated by the G alpha protein GNAL/G(olf) in signaling cascades triggered by odorant receptors. Activated by forskolin. After forskolin treatment, activity is further increased by calcium/calmodulin. In the absence of forskolin, calcium/calmodulin has little effect on enzyme activity. Catalyzes the formation of the signaling molecule cAMP in response to G-protein signaling. Participates in signaling cascades triggered by odorant receptors via its function in cAMP biosynthesis: specifically activated by G alpha protein GNAL/G(olf) in olfactory epithelium. Required for the perception of odorants. Required for normal sperm motility and normal male fertility. Plays a role in regulating insulin levels and body fat accumulation in response to a high fat diet. This Rattus norvegicus (Rat) protein is Adenylate cyclase type 3.